The chain runs to 216 residues: MSKVSRESLNEAIAEVLKGSSEKPRKFRETIELQIGLKNYDPQKDKRFSGSIRLKHIPRPNMKVCVFGDQHHLDEAAAGDIPSMSADDLKKLNKQKKLIKKLAKSYDAFIASESLIKQIPRILGPGLNKAGKFPSVVTHGESLQSKSDEIRATVKFQMKKVLCLSVAVGHVGLTQEELVSNISLSINFLVSLLKKNWQNVRSLNIKSTMGKPQRVY.

This sequence belongs to the universal ribosomal protein uL1 family.

The chain is Large ribosomal subunit protein uL1 from Caenorhabditis elegans.